The following is a 786-amino-acid chain: Probable aminopeptidase 1 (786 aa).

Residues glutamate 103 and 235–239 each bind substrate; that span reads GAMEN. Residue histidine 270 coordinates Zn(2+). Glutamate 271 acts as the Proton acceptor in catalysis. Zn(2+) contacts are provided by histidine 274 and glutamate 293.

Belongs to the peptidase M1 family. Zn(2+) is required as a cofactor.

The protein localises to the cytoplasm. This chain is Probable aminopeptidase 1 (ape1), found in Sulfurisphaera tokodaii (strain DSM 16993 / JCM 10545 / NBRC 100140 / 7) (Sulfolobus tokodaii).